The following is a 904-amino-acid chain: uncharacterized protein (904 aa).

Disordered regions lie at residues 247-275 and 328-360; these read KIGK…SLEF and GDSQ…HHFS. Residues 342-360 show a composition bias toward polar residues; sequence GAQTLSPTSHPSSANHHFS. Residues 778 to 798 traverse the membrane as a helical segment; it reads VVQGMILMFAGGKLIFGGRVL.

It localises to the membrane. This is an uncharacterized protein from Homo sapiens (Human).